Reading from the N-terminus, the 440-residue chain is Thymidine phosphorylase (440 aa).

It belongs to the thymidine/pyrimidine-nucleoside phosphorylase family. Homodimer.

It carries out the reaction thymidine + phosphate = 2-deoxy-alpha-D-ribose 1-phosphate + thymine. It participates in pyrimidine metabolism; dTMP biosynthesis via salvage pathway; dTMP from thymine: step 1/2. Its function is as follows. The enzymes which catalyze the reversible phosphorolysis of pyrimidine nucleosides are involved in the degradation of these compounds and in their utilization as carbon and energy sources, or in the rescue of pyrimidine bases for nucleotide synthesis. This chain is Thymidine phosphorylase, found in Escherichia coli O127:H6 (strain E2348/69 / EPEC).